We begin with the raw amino-acid sequence, 375 residues long: 23S rRNA (uracil(747)-C(5))-methyltransferase RlmC (375 aa).

[4Fe-4S] cluster contacts are provided by Cys3, Cys11, Cys14, and Cys87. Gln212, Phe241, Glu262, and Asn307 together coordinate S-adenosyl-L-methionine. Cys334 (nucleophile) is an active-site residue.

This sequence belongs to the class I-like SAM-binding methyltransferase superfamily. RNA M5U methyltransferase family. RlmC subfamily.

The enzyme catalyses uridine(747) in 23S rRNA + S-adenosyl-L-methionine = 5-methyluridine(747) in 23S rRNA + S-adenosyl-L-homocysteine + H(+). Catalyzes the formation of 5-methyl-uridine at position 747 (m5U747) in 23S rRNA. The chain is 23S rRNA (uracil(747)-C(5))-methyltransferase RlmC from Enterobacter sp. (strain 638).